A 244-amino-acid polypeptide reads, in one-letter code: Ribonuclease PH (244 aa).

Residues Arg86 and 124 to 126 (GTR) each bind phosphate.

This sequence belongs to the RNase PH family. Homohexameric ring arranged as a trimer of dimers.

The enzyme catalyses tRNA(n+1) + phosphate = tRNA(n) + a ribonucleoside 5'-diphosphate. Its function is as follows. Phosphorolytic 3'-5' exoribonuclease that plays an important role in tRNA 3'-end maturation. Removes nucleotide residues following the 3'-CCA terminus of tRNAs; can also add nucleotides to the ends of RNA molecules by using nucleoside diphosphates as substrates, but this may not be physiologically important. Probably plays a role in initiation of 16S rRNA degradation (leading to ribosome degradation) during starvation. This chain is Ribonuclease PH, found in Oceanobacillus iheyensis (strain DSM 14371 / CIP 107618 / JCM 11309 / KCTC 3954 / HTE831).